The sequence spans 139 residues: Trafficking protein particle complex subunit 2-like protein (139 aa).

This sequence belongs to the TRAPP small subunits family. Sedlin subfamily.

Its subcellular location is the cytoplasm. The protein localises to the perinuclear region. It localises to the endoplasmic reticulum. The protein resides in the golgi apparatus. In terms of biological role, may play a role in vesicular transport from endoplasmic reticulum to Golgi. This Xenopus tropicalis (Western clawed frog) protein is Trafficking protein particle complex subunit 2-like protein (trappc2l).